A 134-amino-acid polypeptide reads, in one-letter code: Crustacean hyperglycemic hormones isoform A (134 aa).

The N-terminal stretch at 1 to 24 (MMACRTLCLVVVMVASLGTSGVGG) is a signal peptide. Residue Gln61 is modified to Pyrrolidone carboxylic acid. Phe63 bears the D-phenylalanine; in form CHH-A-II mark. Intrachain disulfides connect Cys67/Cys103, Cys83/Cys99, and Cys86/Cys112. Residue Val132 is modified to Valine amide.

Belongs to the arthropod CHH/MIH/GIH/VIH hormone family. In terms of processing, stereoinversion of L-Phe (form CHH-A-I) to D-Phe (form CHH-A-II). As to expression, produced by the medulla terminalis X-organ in the eyestalks and transported to the sinus gland where they are stored and released. Present also in the ventral nervous system.

It localises to the secreted. In terms of biological role, CHH is the most abundant hormone in the sinus gland of isopods and decapods which controls the blood sugar level. Has a secretagogue action over the amylase released from the midgut gland. May act as a stress hormone. Its function is as follows. MIH may inhibit Y-organs where molting hormone (ecdysteroid) is secreted and a molting cycle is initiated when MIH secretion diminishes or stops. The chain is Crustacean hyperglycemic hormones isoform A from Homarus americanus (American lobster).